Reading from the N-terminus, the 167-residue chain is Ribosome maturation factor RimM (167 aa).

Residues 94 to 165 (ENEFYYSDII…KIIITPMEGL (72 aa)) form the PRC barrel domain.

The protein belongs to the RimM family. As to quaternary structure, binds ribosomal protein uS19.

It localises to the cytoplasm. An accessory protein needed during the final step in the assembly of 30S ribosomal subunit, possibly for assembly of the head region. Essential for efficient processing of 16S rRNA. May be needed both before and after RbfA during the maturation of 16S rRNA. It has affinity for free ribosomal 30S subunits but not for 70S ribosomes. The polypeptide is Ribosome maturation factor RimM (Staphylococcus aureus (strain Mu3 / ATCC 700698)).